The following is a 340-amino-acid chain: Mitochondrial distribution and morphology protein 12 (340 aa).

The SMP-LTD domain maps to 1-321 (MSIDLDWDGM…WPSWIKVSME (321 aa)). Disordered regions lie at residues 79–107 (HYLP…TNPI), 161–184 (SVRE…EDRE), and 319–340 (SMED…EDEH). The span at 89–106 (QRRSAPSTPHIHTNTTNP) shows a compositional bias: polar residues. Over residues 321–340 (EDEDSDDEEGEEEGDQEDEH) the composition is skewed to acidic residues.

The protein belongs to the MDM12 family. As to quaternary structure, component of the ER-mitochondria encounter structure (ERMES) or MDM complex, composed of MMM1, MDM10, MDM12 and MDM34. An MMM1 homodimer associates with one molecule of MDM12 on each side in a pairwise head-to-tail manner, and the SMP-LTD domains of MMM1 and MDM12 generate a continuous hydrophobic tunnel for phospholipid trafficking.

It is found in the mitochondrion outer membrane. Its subcellular location is the endoplasmic reticulum membrane. Functionally, component of the ERMES/MDM complex, which serves as a molecular tether to connect the endoplasmic reticulum (ER) and mitochondria. Components of this complex are involved in the control of mitochondrial shape and protein biogenesis, and function in nonvesicular lipid trafficking between the ER and mitochondria. MDM12 is required for the interaction of the ER-resident membrane protein MMM1 and the outer mitochondrial membrane-resident beta-barrel protein MDM10. The MDM12-MMM1 subcomplex functions in the major beta-barrel assembly pathway that is responsible for biogenesis of all mitochondrial outer membrane beta-barrel proteins, and acts in a late step after the SAM complex. The MDM10-MDM12-MMM1 subcomplex further acts in the TOM40-specific pathway after the action of the MDM12-MMM1 complex. Essential for establishing and maintaining the structure of mitochondria and maintenance of mtDNA nucleoids. In Yarrowia lipolytica (strain CLIB 122 / E 150) (Yeast), this protein is Mitochondrial distribution and morphology protein 12.